The primary structure comprises 392 residues: 1-deoxy-D-xylulose 5-phosphate reductoisomerase (392 aa).

NADPH-binding residues include Thr10, Gly11, Ser12, Ile13, Arg37, Gln38, and Asn124. A 1-deoxy-D-xylulose 5-phosphate-binding site is contributed by Lys125. Glu126 serves as a coordination point for NADPH. Asp150 is a binding site for Mn(2+). Ser151, Glu152, Ser179, and His202 together coordinate 1-deoxy-D-xylulose 5-phosphate. Residue Glu152 participates in Mn(2+) binding. Gly208 contributes to the NADPH binding site. Ser215, Asn220, Lys221, and Glu224 together coordinate 1-deoxy-D-xylulose 5-phosphate. Glu224 serves as a coordination point for Mn(2+).

This sequence belongs to the DXR family. It depends on Mg(2+) as a cofactor. Requires Mn(2+) as cofactor.

The catalysed reaction is 2-C-methyl-D-erythritol 4-phosphate + NADP(+) = 1-deoxy-D-xylulose 5-phosphate + NADPH + H(+). The protein operates within isoprenoid biosynthesis; isopentenyl diphosphate biosynthesis via DXP pathway; isopentenyl diphosphate from 1-deoxy-D-xylulose 5-phosphate: step 1/6. Its function is as follows. Catalyzes the NADPH-dependent rearrangement and reduction of 1-deoxy-D-xylulose-5-phosphate (DXP) to 2-C-methyl-D-erythritol 4-phosphate (MEP). In Cupriavidus metallidurans (strain ATCC 43123 / DSM 2839 / NBRC 102507 / CH34) (Ralstonia metallidurans), this protein is 1-deoxy-D-xylulose 5-phosphate reductoisomerase.